A 290-amino-acid polypeptide reads, in one-letter code: Protein MGF 110-9L (290 aa).

3 helical membrane passes run 1–19, 128–148, and 163–183; these read MKVIVFLLVLLEMQRVIQN, VENIKHTCLCMVATIALMVYI, and LLIFLGIYLLLGILMTNIIMN. N-linked (GlcNAc...) asparagine; by host glycans are attached at residues Asn-242 and Asn-267.

Belongs to the asfivirus MGF 110 family.

Its subcellular location is the host membrane. Functionally, plays a role in virus cell tropism, and may be required for efficient virus replication in macrophages. This Ornithodoros (relapsing fever ticks) protein is Protein MGF 110-9L.